A 357-amino-acid chain; its full sequence is Probable dual-specificity RNA methyltransferase RlmN (357 aa).

Glu-92 functions as the Proton acceptor in the catalytic mechanism. The region spanning 98 to 330 is the Radical SAM core domain; the sequence is QEYGLSVCVT…KKNGINCVIR (233 aa). Cys-105 and Cys-341 are disulfide-bonded. Residues Cys-112, Cys-116, and Cys-119 each coordinate [4Fe-4S] cluster. S-adenosyl-L-methionine contacts are provided by residues 164 to 165, Ser-196, 219 to 221, and Asn-297; these read GE and SLH. The S-methylcysteine intermediate role is filled by Cys-341.

This sequence belongs to the radical SAM superfamily. RlmN family. Requires [4Fe-4S] cluster as cofactor.

Its subcellular location is the cytoplasm. It carries out the reaction adenosine(2503) in 23S rRNA + 2 reduced [2Fe-2S]-[ferredoxin] + 2 S-adenosyl-L-methionine = 2-methyladenosine(2503) in 23S rRNA + 5'-deoxyadenosine + L-methionine + 2 oxidized [2Fe-2S]-[ferredoxin] + S-adenosyl-L-homocysteine. It catalyses the reaction adenosine(37) in tRNA + 2 reduced [2Fe-2S]-[ferredoxin] + 2 S-adenosyl-L-methionine = 2-methyladenosine(37) in tRNA + 5'-deoxyadenosine + L-methionine + 2 oxidized [2Fe-2S]-[ferredoxin] + S-adenosyl-L-homocysteine. Its function is as follows. Specifically methylates position 2 of adenine 2503 in 23S rRNA and position 2 of adenine 37 in tRNAs. This Enterococcus faecalis (strain ATCC 700802 / V583) protein is Probable dual-specificity RNA methyltransferase RlmN.